The sequence spans 186 residues: Potassium-transporting ATPase KdpC subunit (186 aa).

Residues 10–30 (LTIITMVLCGFLFPLAITLIG) traverse the membrane as a helical segment.

Belongs to the KdpC family. As to quaternary structure, the system is composed of three essential subunits: KdpA, KdpB and KdpC.

It is found in the cell membrane. Its function is as follows. Part of the high-affinity ATP-driven potassium transport (or Kdp) system, which catalyzes the hydrolysis of ATP coupled with the electrogenic transport of potassium into the cytoplasm. This subunit acts as a catalytic chaperone that increases the ATP-binding affinity of the ATP-hydrolyzing subunit KdpB by the formation of a transient KdpB/KdpC/ATP ternary complex. The polypeptide is Potassium-transporting ATPase KdpC subunit (Staphylococcus aureus (strain MRSA252)).